A 116-amino-acid chain; its full sequence is MELGLSWVFLVAILEGVQCEVQLVESGGGLVQPGGSLRLSCAASGFTFSSYDMHWVRQATGKGLEWVSAIGTAGDPYYPGSVKGRFTISRENAKNSLYLQMNSLRAGDTAVYYCAR.

An N-terminal signal peptide occupies residues Met-1–Cys-19. The segment at Glu-20–Ser-44 is framework-1. An Ig-like domain is found at Glu-20–Arg-116. A disulfide bond links Cys-41 and Cys-114. Residues Gly-45 to Asp-52 are complementarity-determining-1. The framework-2 stretch occupies residues Met-53–Ala-69. Residues Ile-70–Pro-76 form a complementarity-determining-2 region. The tract at residues Tyr-77–Cys-114 is framework-3. The segment at Ala-115–Arg-116 is complementarity-determining-3.

As to quaternary structure, immunoglobulins are composed of two identical heavy chains and two identical light chains; disulfide-linked.

It is found in the secreted. The protein resides in the cell membrane. Functionally, v region of the variable domain of immunoglobulin heavy chains that participates in the antigen recognition. Immunoglobulins, also known as antibodies, are membrane-bound or secreted glycoproteins produced by B lymphocytes. In the recognition phase of humoral immunity, the membrane-bound immunoglobulins serve as receptors which, upon binding of a specific antigen, trigger the clonal expansion and differentiation of B lymphocytes into immunoglobulins-secreting plasma cells. Secreted immunoglobulins mediate the effector phase of humoral immunity, which results in the elimination of bound antigens. The antigen binding site is formed by the variable domain of one heavy chain, together with that of its associated light chain. Thus, each immunoglobulin has two antigen binding sites with remarkable affinity for a particular antigen. The variable domains are assembled by a process called V-(D)-J rearrangement and can then be subjected to somatic hypermutations which, after exposure to antigen and selection, allow affinity maturation for a particular antigen. The protein is Immunoglobulin heavy variable 3-13 of Homo sapiens (Human).